Here is a 264-residue protein sequence, read N- to C-terminus: Thymidylate synthase (264 aa).

Arg-21 contacts dUMP. Position 51 (His-51) interacts with (6R)-5,10-methylene-5,6,7,8-tetrahydrofolate. 126–127 (RR) contributes to the dUMP binding site. Residue Cys-146 is the Nucleophile of the active site. DUMP is bound by residues 166–169 (RSAD), Asn-177, and 207–209 (HLY). Asp-169 contributes to the (6R)-5,10-methylene-5,6,7,8-tetrahydrofolate binding site. Residue Ala-263 participates in (6R)-5,10-methylene-5,6,7,8-tetrahydrofolate binding.

Belongs to the thymidylate synthase family. Bacterial-type ThyA subfamily. Homodimer.

It is found in the cytoplasm. The catalysed reaction is dUMP + (6R)-5,10-methylene-5,6,7,8-tetrahydrofolate = 7,8-dihydrofolate + dTMP. The protein operates within pyrimidine metabolism; dTTP biosynthesis. Functionally, catalyzes the reductive methylation of 2'-deoxyuridine-5'-monophosphate (dUMP) to 2'-deoxythymidine-5'-monophosphate (dTMP) while utilizing 5,10-methylenetetrahydrofolate (mTHF) as the methyl donor and reductant in the reaction, yielding dihydrofolate (DHF) as a by-product. This enzymatic reaction provides an intracellular de novo source of dTMP, an essential precursor for DNA biosynthesis. This chain is Thymidylate synthase, found in Legionella pneumophila (strain Paris).